The chain runs to 412 residues: NADH-ubiquinone oxidoreductase 49 kDa subunit (412 aa).

This sequence belongs to the complex I 49 kDa subunit family.

Its subcellular location is the hydrogenosome. The catalysed reaction is a ubiquinone + NADH + 5 H(+)(in) = a ubiquinol + NAD(+) + 4 H(+)(out). Transfer of electrons from NADH to the respiratory chain. The immediate electron acceptor for the enzyme is believed to be ubiquinone. Component of the iron-sulfur (IP) fragment of the enzyme. The sequence is that of NADH-ubiquinone oxidoreductase 49 kDa subunit (nad7) from Nyctotherus ovalis.